The chain runs to 708 residues: Assimilatory nitrate reductase (708 aa).

The region spanning 15 to 73 is the 4Fe-4S Mo/W bis-MGD-type domain; that stretch reads TKQVPTTCMRCAVGCGHVHLGSENAYGLETVRGDPSHPVNNGLACGRGIRESADPAGEW. 4 residues coordinate [4Fe-4S] cluster: Cys-22, Cys-25, Cys-29, and Cys-59. The disordered stretch occupies residues 586 to 613; that stretch reads TTGREADGYNTGVRSRSDTPEEPVARVN.

This sequence belongs to the prokaryotic molybdopterin-containing oxidoreductase family. NasA/NapA/NarB subfamily. Is probably a monomer. Initially characterized as a dimer of proteins with a MW of 105 and 50 kDa. [4Fe-4S] cluster serves as cofactor. It depends on Mo-bis(molybdopterin guanine dinucleotide) as a cofactor.

The protein localises to the cytoplasm. It catalyses the reaction nitrite + 2 oxidized [2Fe-2S]-[ferredoxin] + H2O = nitrate + 2 reduced [2Fe-2S]-[ferredoxin] + 2 H(+). Its pathway is nitrogen metabolism; nitrate reduction (assimilation). With respect to regulation, inhibited by cyanide and azide. Functionally, nitrate reductase is a key enzyme involved in the first step of nitrate assimilation. Catalyzes the reduction of nitrate to nitrite, using ferredoxin as the electron donor. Can use reduced methyl viologen but neither NADPH nor NADH as electron donors. This is Assimilatory nitrate reductase from Haloferax mediterranei (strain ATCC 33500 / DSM 1411 / JCM 8866 / NBRC 14739 / NCIMB 2177 / R-4) (Halobacterium mediterranei).